Here is a 366-residue protein sequence, read N- to C-terminus: Transcription factor IIIA (366 aa).

9 C2H2-type zinc fingers span residues tyrosine 35 to histidine 59, phenylalanine 65 to histidine 89, phenylalanine 95 to histidine 120, tyrosine 127 to histidine 151, tyrosine 157 to histidine 181, tyrosine 184 to histidine 210, alanine 214 to histidine 236, tyrosine 243 to histidine 268, and phenylalanine 274 to histidine 298. Serine 38 carries the post-translational modification Phosphoserine; by CK2. The segment covering aspartate 299–proline 310 has biased composition (basic and acidic residues). Residues aspartate 299 to glutamine 366 are disordered. Serine 336 is subject to Phosphoserine; by CK2; in vitro.

In terms of processing, the N-terminus is blocked. In terms of tissue distribution, synthesized in oocytes and, in much lower levels, in somatic cells.

The protein resides in the nucleus. Involved in ribosomal large subunit biogenesis. Acts both as a positive transcription factor for 5S RNA genes, and as a specific RNA binding protein that complexes with 5S RNA in oocytes to form the 7S ribonucleoprotein storage particle. May play an essential role in the developmental change in 5S RNA gene expression. Interacts with the internal control region (ICR) of approximately 50 bases within the 5S RNA genes, is required for correct transcription of these genes by RNA polymerase III. Also binds the transcribed 5S RNA's. This is Transcription factor IIIA (gtf3a) from Xenopus laevis (African clawed frog).